An 882-amino-acid chain; its full sequence is Protein translocase subunit SecA (882 aa).

ATP is bound by residues Q79, 97-101 (GEGKT), and D487.

The protein belongs to the SecA family.

It localises to the plastid. The protein localises to the chloroplast stroma. The protein resides in the chloroplast thylakoid membrane. The catalysed reaction is ATP + H2O + cellular proteinSide 1 = ADP + phosphate + cellular proteinSide 2.. Functionally, has a central role in coupling the hydrolysis of ATP to the transfer of proteins across the thylakoid membrane. The chain is Protein translocase subunit SecA from Gracilaria tenuistipitata var. liui (Red alga).